A 527-amino-acid chain; its full sequence is ATP synthase subunit alpha (527 aa).

169–176 contacts ATP; it reads GDRQTGKT.

Belongs to the ATPase alpha/beta chains family. F-type ATPases have 2 components, CF(1) - the catalytic core - and CF(0) - the membrane proton channel. CF(1) has five subunits: alpha(3), beta(3), gamma(1), delta(1), epsilon(1). CF(0) has three main subunits: a(1), b(2) and c(9-12). The alpha and beta chains form an alternating ring which encloses part of the gamma chain. CF(1) is attached to CF(0) by a central stalk formed by the gamma and epsilon chains, while a peripheral stalk is formed by the delta and b chains.

It localises to the cell membrane. The catalysed reaction is ATP + H2O + 4 H(+)(in) = ADP + phosphate + 5 H(+)(out). Produces ATP from ADP in the presence of a proton gradient across the membrane. The alpha chain is a regulatory subunit. This Metamycoplasma arthritidis (strain 158L3-1) (Mycoplasma arthritidis) protein is ATP synthase subunit alpha.